A 1436-amino-acid chain; its full sequence is MALGRHLSLRGLCVLLLGTMVGGQALELRLKDGVHRCEGRVEVKHQGEWGTVDGYRWTLKDASVVCRQLGCGAAIGFPGGAYFGPGLGPIWLLYTSCEGTESTVSDCEHSNIKDYRNDGYNHGRDAGVVCSGFVRLAGGDGPCSGRVEVHSGEAWIPVSDGNFTLATAQIICAELGCGKAVSVLGHELFRESSAQVWAEEFRCEGEEPELWVCPRVPCPGGTCHHSGSAQVVCSAYSEVRLMTNGSSQCEGQVEMNISGQWRALCASHWSLANANVICRQLGCGVAISTPGGPHLVEEGDQILTARFHCSGAESFLWSCPVTALGGPDCSHGNTASVICSGNQIQVLPQCNDSVSQPTGSAASEDSAPYCSDSRQLRLVDGGGPCAGRVEILDQGSWGTICDDGWDLDDARVVCRQLGCGEALNATGSAHFGAGSGPIWLDNLNCTGKESHVWRCPSRGWGQHNCRHKQDAGVICSEFLALRMVSEDQQCAGWLEVFYNGTWGSVCRNPMEDITVSTICRQLGCGDSGTLNSSVALREGFRPQWVDRIQCRKTDTSLWQCPSDPWNYNSCSPKEEAYIWCADSRQIRLVDGGGRCSGRVEILDQGSWGTICDDRWDLDDARVVCKQLGCGEALDATVSSFFGTGSGPIWLDEVNCRGEESQVWRCPSWGWRQHNCNHQEDAGVICSGFVRLAGGDGPCSGRVEVHSGEAWTPVSDGNFTLPTAQVICAELGCGKAVSVLGHMPFRESDGQVWAEEFRCDGGEPELWSCPRVPCPGGTCLHSGAAQVVCSVYTEVQLMKNGTSQCEGQVEMKISGRWRALCASHWSLANANVVCRQLGCGVAISTPRGPHLVEGGDQISTAQFHCSGAESFLWSCPVTALGGPDCSHGNTASVICSGNHTQVLPQCNDFLSQPAGSAASEESSPYCSDSRQLRLVDGGGPCGGRVEILDQGSWGTICDDDWDLDDARVVCRQLGCGEALNATGSAHFGAGSGPIWLDDLNCTGKESHVWRCPSRGWGRHDCRHKEDAGVICSEFLALRMVSEDQQCAGWLEVFYNGTWGSVCRSPMEDITVSVICRQLGCGDSGSLNTSVGLREGSRPRWVDLIQCRKMDTSLWQCPSGPWKYSSCSPKEEAYISCEGRRPKSCPTAAACTDREKLRLRGGDSECSGRVEVWHNGSWGTVCDDSWSLAEAEVVCQQLGCGQALEAVRSAAFGPGNGSIWLDEVQCGGRESSLWDCVAEPWGQSDCKHEEDAGVRCSGVRTTLPTTTAGTRTTSNSLPGIFSLPGVLCLILGSLLFLVLVILVTQLLRWRAERRALSSYEDALAEAVYEELDYLLTQKEGLGSPDQMTDVPDENYDDAEEVPVPGTPSPSQGNEEEVPPEKEDGVRSSQTGSFLNFSREAANPGEGEESFWLLQGKKGDAGYDDVELSALGTSPVTFS.

The N-terminal stretch at 1-25 (MALGRHLSLRGLCVLLLGTMVGGQA) is a signal peptide. 3 SRCR domains span residues 28 to 131 (LRLK…VVCS), 134 to 234 (VRLA…VVCS), and 239 to 340 (VRLM…VICS). Intrachain disulfides connect Cys-66/Cys-130 and Cys-97/Cys-107. Asn-162 carries an N-linked (GlcNAc...) asparagine glycan. Cystine bridges form between Cys-172-Cys-233 and Cys-203-Cys-213. 2 N-linked (GlcNAc...) asparagine glycosylation sites follow: Asn-244 and Asn-256. 3 cysteine pairs are disulfide-bonded: Cys-265-Cys-329, Cys-278-Cys-339, and Cys-309-Cys-319. Residues Asn-351, Asn-424, and Asn-444 are each glycosylated (N-linked (GlcNAc...) asparagine). SRCR domains follow at residues 376–476 (LRLV…VICS), 481–581 (LRMV…IWCA), 586–686 (IRLV…VICS), 689–789 (VRLA…VVCS), and 794–895 (VQLM…VICS). 3 cysteine pairs are disulfide-bonded: Cys-401–Cys-465, Cys-414–Cys-475, and Cys-445–Cys-455. Residues Asn-499 and Asn-531 are each glycosylated (N-linked (GlcNAc...) asparagine). Cystine bridges form between Cys-506–Cys-570, Cys-519–Cys-580, Cys-550–Cys-560, Cys-611–Cys-675, Cys-624–Cys-685, and Cys-655–Cys-665. Asn-717 carries an N-linked (GlcNAc...) asparagine glycan. Disulfide bonds link Cys-727-Cys-788 and Cys-758-Cys-768. An N-linked (GlcNAc...) asparagine glycan is attached at Asn-799. Cystine bridges form between Cys-820–Cys-884, Cys-833–Cys-894, and Cys-864–Cys-874. N-linked (GlcNAc...) asparagine glycosylation is found at Asn-897, Asn-979, and Asn-999. 3 consecutive SRCR domains span residues 931–1031 (LRLV…VICS), 1036–1136 (LRMV…ISCE), and 1155–1255 (LRLR…VRCS). Intrachain disulfides connect Cys-956–Cys-1020, Cys-969–Cys-1030, and Cys-1000–Cys-1010. 2 N-linked (GlcNAc...) asparagine glycosylation sites follow: Asn-1054 and Asn-1086. Intrachain disulfides connect Cys-1061–Cys-1125, Cys-1074–Cys-1135, and Cys-1105–Cys-1115. Residues Asn-1173 and Asn-1214 are each glycosylated (N-linked (GlcNAc...) asparagine). Disulfide bonds link Cys-1180-Cys-1244, Cys-1193-Cys-1254, and Cys-1224-Cys-1234. The disordered stretch occupies residues 1337-1410 (EGLGSPDQMT…PGEGEESFWL (74 aa)). Residues 1348-1358 (VPDENYDDAEE) are compositionally biased toward acidic residues. Residues 1384–1393 (RSSQTGSFLN) are compositionally biased toward polar residues. Residue Asn-1393 is glycosylated (N-linked (GlcNAc...) asparagine).

As to expression, expressed on subsets of CD4-CD8- gamma delta T lymphocytes.

Its subcellular location is the secreted. This chain is Antigen WC1.1, found in Bos taurus (Bovine).